A 275-amino-acid polypeptide reads, in one-letter code: MSVLINEKLHSRRLKWRWPLSRQVTLSIGTLAVLLTVWWTVATLQLISPLFLPPPQQVLEKLLTIAGPQGFMDATLWQHLAASLTRIMLALFAAVLFGIPVGIAMGLSPTVRGILDPIIELYRPVPPLAYLPLMVIWFGIGETSKILLIYLAIFAPVAMSALAGVKSVQQVRIRAAQSLGASRAQVLWFVILPGALPEILTGLRIGLGVGWSTLVAAELIAATRGLGFMVQSAGEFLATDVVLAGIAVIAIIAFLLELGLRALQRRLTPWHGEVQ.

Helical transmembrane passes span Leu-20–Ala-42, Ile-87–Leu-107, Pro-124–Ser-144, Ile-146–Lys-166, Val-186–Gly-206, Val-209–Met-229, and Phe-236–Leu-256. Residues Leu-80–Gln-264 enclose the ABC transmembrane type-1 domain.

It belongs to the binding-protein-dependent transport system permease family. CysTW subfamily.

It localises to the cell inner membrane. In terms of biological role, part of a binding-protein-dependent transport system for taurine. Probably responsible for the translocation of the substrate across the membrane. The polypeptide is Taurine transport system permease protein TauC (tauC) (Escherichia coli (strain K12)).